The chain runs to 351 residues: Translation initiation factor eIF2B subunit beta (351 aa).

Belongs to the eIF-2B alpha/beta/delta subunits family. In terms of assembly, component of the translation initiation factor 2B (eIF2B) complex which is a heterodecamer of two sets of five different subunits: alpha, beta, gamma, delta and epsilon. Subunits alpha, beta and delta comprise a regulatory subcomplex and subunits epsilon and gamma comprise a catalytic subcomplex. Within the complex, the hexameric regulatory complex resides at the center, with the two heterodimeric catalytic subcomplexes bound on opposite sides.

Its subcellular location is the cytoplasm. It localises to the cytosol. Its activity is regulated as follows. Activated by the chemical integrated stress response (ISR) inhibitor ISRIB which stimulates guanine nucleotide exchange factor activity for both phosphorylated and unphosphorylated eIF2. Its function is as follows. Acts as a component of the translation initiation factor 2B (eIF2B) complex, which catalyzes the exchange of GDP for GTP on eukaryotic initiation factor 2 (eIF2) gamma subunit. Its guanine nucleotide exchange factor activity is repressed when bound to eIF2 complex phosphorylated on the alpha subunit, thereby limiting the amount of methionyl-initiator methionine tRNA available to the ribosome and consequently global translation is repressed. This Mus musculus (Mouse) protein is Translation initiation factor eIF2B subunit beta (Eif2b2).